A 78-amino-acid polypeptide reads, in one-letter code: Structural DNA-binding protein p10 (78 aa).

Residues 1 to 24 (MPTKAGTKSTANKKTTKGSSKSGS) are compositionally biased toward low complexity. A disordered region spans residues 1 to 41 (MPTKAGTKSTANKKTTKGSSKSGSPRGHTGKTHAPPSMHSG).

Belongs to the asfivirus P10 family.

The protein localises to the virion. In terms of biological role, may play a role in genome packaging through direct interaction with viral DNA. Binds to ssDNA and dsDNA with the same apparent affinity in vitro. The chain is Structural DNA-binding protein p10 from African swine fever virus (isolate Tick/South Africa/Pretoriuskop Pr4/1996) (ASFV).